Here is a 569-residue protein sequence, read N- to C-terminus: Cytochrome P450 monooxygenase abl1 (569 aa).

Cys-464 lines the heme pocket.

The protein belongs to the cytochrome P450 family. It depends on heme as a cofactor.

Its pathway is hormone biosynthesis. Functionally, cytochrome P450 monooxygenase; part of the gene cluster that mediates the biosynthesis of abscisic acid (ABA), a phytohormone that acts antagonistically toward salicylic acid (SA), jasmonic acid (JA) and ethylene (ETH) signaling, to impede plant defense responses. The first step of the pathway catalyzes the reaction from farnesyl diphosphate to alpha-ionylideneethane performed by the alpha-ionylideneethane synthase abl3 via a three-step reaction mechanism involving 2 neutral intermediates, beta-farnesene and allofarnesene. The cytochrome P450 monooxygenase abl1 might then be involved in the conversion of alpha-ionylideneethane to alpha-ionylideneacetic acid. Alpha-ionylideneacetic acid is further converted to abscisic acid in 2 steps involving the cytochrome P450 monooxygenase abl2 and the short-chain dehydrogenase/reductase abl4, via the intermediates 1'-deoxy-ABA or 1',4'-trans-diol-ABA, depending on the order of action of these 2 enzymes. Abl2 is responsible for the hydroxylation of carbon atom C-1' and abl4 might be involved in the oxidation of the C-4' carbon atom. The protein is Cytochrome P450 monooxygenase abl1 of Leptosphaeria maculans (strain JN3 / isolate v23.1.3 / race Av1-4-5-6-7-8) (Blackleg fungus).